The primary structure comprises 270 residues: tRNA pseudouridine synthase A (270 aa).

Catalysis depends on Asp52, which acts as the Nucleophile. Substrate is bound at residue Tyr110.

Belongs to the tRNA pseudouridine synthase TruA family. In terms of assembly, homodimer.

It carries out the reaction uridine(38/39/40) in tRNA = pseudouridine(38/39/40) in tRNA. In terms of biological role, formation of pseudouridine at positions 38, 39 and 40 in the anticodon stem and loop of transfer RNAs. The sequence is that of tRNA pseudouridine synthase A from Paraburkholderia xenovorans (strain LB400).